The chain runs to 201 residues: MAEPGFLSLTLIGALVFGYFLGSIPFGLILTRLAGLGDVRSIGSGNIGATNVLRTGNKKLAAATLIFDMLKGTVAVLVASRYGPDAAIGAGFGAFIGHLFPVWIGFKGGKGVATYLGVLIGLAWPGALVFAAVWIVTALLTRYSSLAALIASIVVPIALYSRGYPAIAVLFAIMTVIVIFKHKANITRLLNGTESKIGAKG.

5 helical membrane-spanning segments follow: residues 9 to 29 (LTLI…FGLI), 60 to 80 (LAAA…LVAS), 86 to 106 (AAIG…WIGF), 116 to 136 (LGVL…VWIV), and 153 to 173 (IVVP…LFAI).

This sequence belongs to the PlsY family. Probably interacts with PlsX.

It localises to the cell inner membrane. The enzyme catalyses an acyl phosphate + sn-glycerol 3-phosphate = a 1-acyl-sn-glycero-3-phosphate + phosphate. Its pathway is lipid metabolism; phospholipid metabolism. Functionally, catalyzes the transfer of an acyl group from acyl-phosphate (acyl-PO(4)) to glycerol-3-phosphate (G3P) to form lysophosphatidic acid (LPA). This enzyme utilizes acyl-phosphate as fatty acyl donor, but not acyl-CoA or acyl-ACP. The chain is Glycerol-3-phosphate acyltransferase from Brucella anthropi (strain ATCC 49188 / DSM 6882 / CCUG 24695 / JCM 21032 / LMG 3331 / NBRC 15819 / NCTC 12168 / Alc 37) (Ochrobactrum anthropi).